A 173-amino-acid polypeptide reads, in one-letter code: dCTP deaminase, dUMP-forming (173 aa).

DCTP contacts are provided by residues 93–98 (RSSTGR), aspartate 111, 119–121 (TLE), glutamine 138, and tyrosine 151. Catalysis depends on glutamate 121, which acts as the Proton donor/acceptor.

This sequence belongs to the dCTP deaminase family. In terms of assembly, homotrimer.

The enzyme catalyses dCTP + 2 H2O = dUMP + NH4(+) + diphosphate. The protein operates within pyrimidine metabolism; dUMP biosynthesis; dUMP from dCTP: step 1/1. Bifunctional enzyme that catalyzes both the deamination of dCTP to dUTP and the hydrolysis of dUTP to dUMP without releasing the toxic dUTP intermediate. The chain is dCTP deaminase, dUMP-forming from Clostridium beijerinckii (strain ATCC 51743 / NCIMB 8052) (Clostridium acetobutylicum).